A 384-amino-acid chain; its full sequence is Aryl-hydrocarbon-interacting protein-like 1 (384 aa).

The 93-residue stretch at R53–Q145 folds into the PPIase FKBP-type domain. 3 TPR repeats span residues V178 to L211, N230 to I263, and V264 to M297. Residues S328 to H384 are disordered. The segment covering S359–T372 has biased composition (low complexity).

Interacts with NUB1.

It localises to the cytoplasm. It is found in the nucleus. May be important in protein trafficking and/or protein folding and stabilization. The chain is Aryl-hydrocarbon-interacting protein-like 1 (AIPL1) from Pan paniscus (Pygmy chimpanzee).